The primary structure comprises 514 residues: Alanine--glyoxylate aminotransferase 2, mitochondrial (514 aa).

Residues 1–41 (MTLIWRHLLRPLCLVTPAPRILEMRPFLNLGASWTSVTKLS) constitute a mitochondrion transit peptide. Lys-71 is modified (N6-acetyllysine; alternate). Lys-71 is modified (N6-succinyllysine; alternate). Lys-84 is modified (N6-acetyllysine). Lys-262 is subject to N6-acetyllysine; alternate. Lys-262 is subject to N6-succinyllysine; alternate. Residue Lys-304 is modified to N6-succinyllysine. N6-(pyridoxal phosphate)lysine is present on Lys-350. N6-acetyllysine; alternate is present on Lys-420. Lys-420 carries the post-translational modification N6-succinyllysine; alternate.

It belongs to the class-III pyridoxal-phosphate-dependent aminotransferase family. In terms of assembly, homotetramer. It depends on pyridoxal 5'-phosphate as a cofactor.

The protein resides in the mitochondrion. The enzyme catalyses glyoxylate + L-alanine = glycine + pyruvate. The catalysed reaction is (R)-3-amino-2-methylpropanoate + pyruvate = 2-methyl-3-oxopropanoate + L-alanine. It catalyses the reaction 3-oxopropanoate + L-alanine = beta-alanine + pyruvate. It carries out the reaction 2-oxobutanoate + L-alanine = (2S)-2-aminobutanoate + pyruvate. The enzyme catalyses N(omega),N(omega)-dimethyl-L-arginine + pyruvate = 5-(3,3-dimethylguanidino)-2-oxopentanoate + L-alanine. The catalysed reaction is N(omega),N('omega)-dimethyl-L-arginine + pyruvate = 5-(3,3'-dimethylguanidino)-2-oxopentanoate + L-alanine. It catalyses the reaction N(omega),N(omega)-dimethyl-L-arginine + glyoxylate = 5-(3,3-dimethylguanidino)-2-oxopentanoate + glycine. It carries out the reaction N(omega),N('omega)-dimethyl-L-arginine + glyoxylate = 5-(3,3'-dimethylguanidino)-2-oxopentanoate + glycine. The enzyme catalyses N(omega)-methyl-L-arginine + pyruvate = 5-(3-methylguanidino)-2-oxopentanoate + L-alanine. The catalysed reaction is N(omega)-methyl-L-arginine + glyoxylate = 5-(3-methylguanidino)-2-oxopentanoate + glycine. It catalyses the reaction L-ornithine + pyruvate = 5-amino-2-oxopentanoate + L-alanine. It carries out the reaction L-ornithine + glyoxylate = 5-amino-2-oxopentanoate + glycine. The enzyme catalyses (2S)-2-aminobutanoate + glyoxylate = 2-oxobutanoate + glycine. The catalysed reaction is N(omega),N(omega)-dimethyl-L-arginine + oxaloacetate = 5-(3,3-dimethylguanidino)-2-oxopentanoate + L-aspartate. It catalyses the reaction oxaloacetate + L-alanine = L-aspartate + pyruvate. It carries out the reaction N(omega),N(omega)-dimethyl-L-arginine + 2-oxobutanoate = 5-(3,3-dimethylguanidino)-2-oxopentanoate + (2S)-2-aminobutanoate. The enzyme catalyses 2-oxopentanoate + N(omega),N(omega)-dimethyl-L-arginine = 5-(3,3-dimethylguanidino)-2-oxopentanoate + L-2-aminopentanoate. The catalysed reaction is 2-oxohexanoate + N(omega),N(omega)-dimethyl-L-arginine = L-2-aminohexanoate + 5-(3,3-dimethylguanidino)-2-oxopentanoate. Its function is as follows. Multifunctional aminotransferase with a broad substrate specificity. Catalyzes the conversion of glyoxylate to glycine using alanine as the amino donor. Catalyzes metabolism of not L- but the D-isomer of D-beta-aminoisobutyric acid to generate 2-methyl-3-oxopropanoate and alanine. Catalyzes the transfer of the amino group from beta-alanine to pyruvate to yield L-alanine and 3-oxopropanoate. Can metabolize NG-monomethyl-L-arginine (NMMA), asymmetric NG,NG-dimethyl-L-arginine (ADMA) and symmetric NG,N'G-dimethyl-L-arginine (SDMA). ADMA is a potent inhibitor of nitric-oxide (NO) synthase, and this activity provides mechanism through which the kidney regulates blood pressure. This Pongo abelii (Sumatran orangutan) protein is Alanine--glyoxylate aminotransferase 2, mitochondrial (AGXT2).